A 185-amino-acid chain; its full sequence is Ribosome-recycling factor (185 aa).

Belongs to the RRF family.

The protein localises to the cytoplasm. Its function is as follows. Responsible for the release of ribosomes from messenger RNA at the termination of protein biosynthesis. May increase the efficiency of translation by recycling ribosomes from one round of translation to another. This chain is Ribosome-recycling factor, found in Bacillus pumilus (strain SAFR-032).